The chain runs to 453 residues: Nuclear and cytoplasmic polyadenylated RNA-binding protein PUB1 (453 aa).

A disordered region spans residues 1 to 67; it reads MSENNEEQHQ…PSVVPANAIT (67 aa). S2 carries the post-translational modification N-acetylserine. 2 RRM domains span residues 75 to 152 and 162 to 240; these read RVLY…WAFQ and FNLF…WAAK. A disordered region spans residues 241–262; sequence RDNNNNNNYQQRRNYGNNNRGG. A compositionally biased stretch (low complexity) spans 244-262; that stretch reads NNNNNYQQRRNYGNNNRGG. Position 260 is an omega-N-methylarginine (R260). Residues 260–264 form an RNA-binding RGG-box region; sequence RGGFR. The RRM 3 domain occupies 341–413; it reads TTAYIGNIPH…RNLRTGWGKE (73 aa). Residues 419–453 form a disordered region; that stretch reads PQQQQQGGQPLIMNDQQQPVMSEQQQQQQQQQQQQ. Residues 434–453 are compositionally biased toward low complexity; it reads QQQPVMSEQQQQQQQQQQQQ.

Interacts with NAB2.

It localises to the cytoplasm. It is found in the nucleus. The protein resides in the P-body. The protein localises to the stress granule. Functionally, may be associated with hnRNA within the nucleus and remains associated during nucleocytoplasmic mRNA transport, once the proteins are in the cytoplasm, disassembly of PUB1-RNA complexes may occur prior to PAB1 binding and formation of a translationally competent RNP complex. Binds to polyadenylated RNA; prefers to bind poly(rU); binds to T-rich single-stranded DNA. The sequence is that of Nuclear and cytoplasmic polyadenylated RNA-binding protein PUB1 from Saccharomyces cerevisiae (strain ATCC 204508 / S288c) (Baker's yeast).